Consider the following 934-residue polypeptide: Protein translocase subunit SecA (934 aa).

Residues Q90, 108–112 (GEGKT), and D509 contribute to the ATP site. Positions 535–565 (PEEDHTPPVPLQRSAPGGFSDAAAPSLPRSG) are disordered.

Belongs to the SecA family. As to quaternary structure, monomer and homodimer. Part of the essential Sec protein translocation apparatus which comprises SecA, SecYEG and auxiliary proteins SecDF. Other proteins may also be involved.

Its subcellular location is the cell inner membrane. It localises to the cellular thylakoid membrane. The protein localises to the cytoplasm. The enzyme catalyses ATP + H2O + cellular proteinSide 1 = ADP + phosphate + cellular proteinSide 2.. Part of the Sec protein translocase complex. Interacts with the SecYEG preprotein conducting channel. Has a central role in coupling the hydrolysis of ATP to the transfer of proteins into and across the cell membrane, serving as an ATP-driven molecular motor driving the stepwise translocation of polypeptide chains across the membrane. Its function is as follows. Probably participates in protein translocation into and across both the cytoplasmic and thylakoid membranes in cyanobacterial cells. The protein is Protein translocase subunit SecA of Synechococcus sp. (strain CC9605).